The chain runs to 89 residues: Small ribosomal subunit protein uS14 (89 aa).

The protein belongs to the universal ribosomal protein uS14 family. Part of the 30S ribosomal subunit. Contacts proteins S3 and S10.

Functionally, binds 16S rRNA, required for the assembly of 30S particles and may also be responsible for determining the conformation of the 16S rRNA at the A site. This chain is Small ribosomal subunit protein uS14, found in Chlorobaculum parvum (strain DSM 263 / NCIMB 8327) (Chlorobium vibrioforme subsp. thiosulfatophilum).